The following is a 326-amino-acid chain: G-protein coupled receptor 171 (326 aa).

The Extracellular portion of the chain corresponds to 1-19 (MTNSSMFCPIYRDLEPFTY). The chain crosses the membrane as a helical span at residues 20 to 40 (FFYLVYLIGIIGSCFATWAFI). Residues 41–48 (QKSTNHRC) lie on the Cytoplasmic side of the membrane. A helical transmembrane segment spans residues 49 to 69 (VSIYLINLLTADFLLTLALPV). Topologically, residues 70 to 89 (KIVVDLGVAPWKLRIFHCQV) are extracellular. An intrachain disulfide couples C87 to C165. Residues 90–110 (TACLIYINMYLSIIFLAFVSI) traverse the membrane as a helical segment. At 111-133 (DRCLQLVHSCKIYRIQEPGFAKM) the chain is on the cytoplasmic side. A helical transmembrane segment spans residues 134-154 (ISAVVWLMVLLIMVPNMVIPI). Over 155 to 182 (KNIKEKSNVGCMEFKREFGKNWHLLTNF) the chain is Extracellular. Residues 183 to 203 (ICVAIFLNFSAIILISNFLVI) form a helical membrane-spanning segment. Over 204 to 221 (RQLYRNRDNANYPSVKSA) the chain is Cytoplasmic. The helical transmembrane segment at 222–242 (LLNILLVTASYIICFVPYHAV) threads the bilayer. Residues 243-268 (RIPYTLSQTEVISDCSTRIALFKAKE) lie on the Extracellular side of the membrane. The chain crosses the membrane as a helical span at residues 269–289 (ATLLLAVSNLCFDPILYYHLS). The Cytoplasmic segment spans residues 290–326 (KAFRLKVTETFASPQKMKAREEKPRRENDVQSTGSAC). A disordered region spans residues 305-326 (KMKAREEKPRRENDVQSTGSAC). The span at 307–318 (KAREEKPRREND) shows a compositional bias: basic and acidic residues.

This sequence belongs to the G-protein coupled receptor 1 family.

It localises to the cell membrane. G-protein coupled receptor for Big LEN, a 16-amino acid neuropeptide produced from the precursor protein, proSAAS (encoded by PCSK1N). Acts through a G(i)-alpha-mediated pathway in response to Big LEN. Big LEN-GPR171 system plays an important role in regulating feeding and metabolism. Also plays a role in modulating fear and anxiety-like behaviors in the basolateral amygdala. Big LEN-GPR171 modulates the mu-type opioid receptor signaling and antinociception. Acts as a negative regulator T cell function. This is G-protein coupled receptor 171 from Rattus norvegicus (Rat).